The sequence spans 30 residues: Photosystem I reaction center subunit XII (30 aa).

Residues 6–26 (VFTILAIALVPAVMAALLGSA) traverse the membrane as a helical segment.

It belongs to the PsaM family.

It is found in the cellular thylakoid membrane. The chain is Photosystem I reaction center subunit XII from Synechococcus sp. (strain JA-3-3Ab) (Cyanobacteria bacterium Yellowstone A-Prime).